Consider the following 1984-residue polypeptide: Sodium channel protein type 9 subunit alpha (1984 aa).

At 1–125 (MAMLPPPGPQ…RRISIKILVH (125 aa)) the chain is on the cytoplasmic side. Residues 26 to 39 (RISEEKAKGHKDEK) are compositionally biased toward basic and acidic residues. The tract at residues 26–55 (RISEEKAKGHKDEKKDDEEEGPKPSSDLEA) is disordered. An I repeat occupies 112–410 (FSPLRRISIK…VAMAYEEQNQ (299 aa)). A helical transmembrane segment spans residues 126–145 (SLFSMLIMCTILTNCIFMTM). The Extracellular portion of the chain corresponds to 146–150 (SNPPD). Residues 151-172 (WTKNVEYTFTGIYTFESLIKIL) form a helical membrane-spanning segment. At 173–185 (ARGFCVGEFTFLR) the chain is on the cytoplasmic side. A helical membrane pass occupies residues 186–204 (DPWNWLDFVVIVFAYLTEF). Over 205-210 (VNLGNV) the chain is Extracellular. The chain crosses the membrane as a helical span at residues 211–227 (SALRTFRVLRALKTISV). Residues 228–241 (IPGLKTIVGALIQS) are Cytoplasmic-facing. Residues 242–267 (VKKLSDVMILTVFCLSVFALIGLQLF) traverse the membrane as a helical segment. Residues 268 to 346 (MGNLKHKCFR…PDYGYTSFDT (79 aa)) are Extracellular-facing. Residues Cys275 and Cys324 are joined by a disulfide bond. The pore-forming intramembrane region spans 347-363 (FGWAFLALFRLMTQDYW). The Extracellular portion of the chain corresponds to 364–376 (ENLYQQTLRAAGK). The chain crosses the membrane as a helical span at residues 377-402 (TYMIFFVVVIFLGSFYLINLILAVVA). A coiled-coil region spans residues 402 to 449 (AMAYEEQNQANIEEAKQKELEFQQMLDRLKKEQEEAEAIAAAAAEYTS). Over 403-744 (MAYEEQNQAN…FIYFIVMDPF (342 aa)) the chain is Cytoplasmic. Residues 458–471 (LSESSSETSRLSSK) are compositionally biased toward low complexity. Disordered stretches follow at residues 458–540 (LSES…SIRG) and 574–609 (HSIFGDNESRRGSLFVPHRPRERRSSNISQASRSPP). A compositionally biased stretch (basic residues) spans 474–486 (KERRNRRKKKKQK). Basic and acidic residues-rich tracts occupy residues 489–509 (SGEEKGDDEKLSKSGSEESIR) and 574–584 (HSIFGDNESRR). Positions 684 to 708 (LRQRAMSRASILTNTVEELEESRQK) form a coiled coil. An II repeat occupies 725–988 (CSPYWIKFKK…EEDTDANNLQ (264 aa)). The helical transmembrane segment at 745 to 761 (VDLAITICIVLNTLFMA) threads the bilayer. Residues 762–770 (MEHHPMTDE) are Extracellular-facing. The chain crosses the membrane as a helical span at residues 771-795 (FKNVLAVGNLVFTGIFAAEMVLKLI). Residues 796–804 (AMDPYEYFQ) are Cytoplasmic-facing. The helical transmembrane segment at 805-821 (VGWNIFDSLIVTLSLVE) threads the bilayer. Residues 822–830 (LFLADVEGL) lie on the Extracellular side of the membrane. Residues 831-847 (SVLRSFRLLRVFKLAKS) form a helical membrane-spanning segment. Residues 848 to 864 (WPTLNMLIKIIGNSVGA) are Cytoplasmic-facing. The helical transmembrane segment at 865-887 (LGNLTLVLAIIVFIFAVVGMQLF) threads the bilayer. The Extracellular segment spans residues 888–914 (GKSYKECVCKINENCKLPRWHMNDFFH). A disulfide bridge connects residues Cys896 and Cys902. The segment at residues 915-927 (SFLIVFRVLCGEW) is an intramembrane region (pore-forming). Residues 928 to 939 (IETMWDCMEVAG) are Extracellular-facing. Residues Cys934 and Cys943 are joined by a disulfide bond. Residues 940–966 (QTMCLIVYMMVMVIGNLVVLNLFLALL) traverse the membrane as a helical segment. Residues 967–1185 (LSSFSSDNLT…WWTIRKTCYR (219 aa)) lie on the Cytoplasmic side of the membrane. 2 disordered regions span residues 1015–1039 (KKPKGSKDTKRTADPNNKRENYISN) and 1089–1145 (PIAP…EPIN). The span at 1019 to 1035 (GSKDTKRTADPNNKREN) shows a compositional bias: basic and acidic residues. A compositionally biased stretch (acidic residues) spans 1135 to 1145 (GEEEAEAEPIN). An III repeat occupies 1178–1486 (TIRKTCYRIV…KKYYNAMKKL (309 aa)). Residues 1186–1210 (IVEHSWFESFIVLMILLSSGALAFE) form a helical membrane-spanning segment. At 1211–1222 (DIYIEKKKTIKI) the chain is on the extracellular side. The chain crosses the membrane as a helical span at residues 1223 to 1248 (ILEYADKIFTYIFILEMLLKWVAYGY). The Cytoplasmic portion of the chain corresponds to 1249–1250 (KT). Residues 1251–1276 (YFTNAWCWLDFLIVDVSLVTLVANTL) traverse the membrane as a helical segment. At 1277-1285 (GYSDLGPIK) the chain is on the extracellular side. Residues 1286 to 1302 (SLRTLRALRPLRALSRF) form a helical membrane-spanning segment. Over 1303–1315 (EGMRVVVNALIGA) the chain is Cytoplasmic. Residues 1316–1340 (IPSIMNVLLVCLIFWLIFSIMGVNL) form a helical membrane-spanning segment. At 1341 to 1392 (FAGKFYECVNTTDGSRFSVSQVANRSECFALMNVSGNVRWKNLKVNFDNVGL) the chain is on the extracellular side. A disulfide bridge links Cys1348 with Cys1368. An intramembrane region (pore-forming) is located at residues 1393 to 1403 (GYLSLLQVATF). The Extracellular portion of the chain corresponds to 1404 to 1429 (KGWMDIMYAAVDSVNVNAQPIYEYNL). Residues 1430–1455 (YMYIYFVIFIIFGSFFTLNLFIGVII) traverse the membrane as a helical segment. The Cytoplasmic segment spans residues 1456–1512 (DNFNQQKKKLGGQDIFMTEEQKKYYNAMKKLGSKKPQKPIPRPGNKFQGCIFDLVTN). Ser1488 is modified (phosphoserine; by PKC). The IV repeat unit spans residues 1495–1793 (IPRPGNKFQG…WEKFDPDATQ (299 aa)). The helical transmembrane segment at 1513–1532 (QAFDITIMVLICLNMVTMMV) threads the bilayer. Residues 1533 to 1543 (EKEGQTDYMSF) lie on the Extracellular side of the membrane. The chain crosses the membrane as a helical span at residues 1544 to 1565 (VLYWINVVFIILFTGECVLKLI). Topologically, residues 1566–1574 (SLRHYYFTV) are cytoplasmic. A helical transmembrane segment spans residues 1575-1596 (GWNIFDFVVVILSIVGMFLAEM). The Extracellular segment spans residues 1597–1605 (IEKYFVSPT). Residues 1606 to 1625 (LFRVIRLARIGRILRLIKGA) form a helical membrane-spanning segment. Residues 1626 to 1638 (KGIRTLLFALMMS) lie on the Cytoplasmic side of the membrane. A helical membrane pass occupies residues 1639 to 1661 (LPALFNIGLLLFLVMFIYAIFGM). Over 1662-1684 (SNFAYVKKEAGINDMFNFETFGN) the chain is Extracellular. The pore-forming intramembrane region spans 1685–1697 (SMICLFQITTSAG). The Extracellular portion of the chain corresponds to 1698-1731 (WDGLLAPILNSAPPDCDPKKVHPGSSVEGDCGNP). Cysteines 1713 and 1728 form a disulfide. Residues 1732–1757 (SVGIFYFVSYIIISFLVVVNMYIAVI) form a helical membrane-spanning segment. Residues 1758 to 1984 (LENFSVATEE…EDKEKDESRK (227 aa)) are Cytoplasmic-facing. The region spanning 1887–1916 (EDVSATIIQRAYRRYRLRQNVKNISSIYIK) is the IQ domain. The segment at 1933–1984 (DNVNENSSPEKTDATASTISPPSYDSVTKPDQEKYETDKTEKEDKEKDESRK) is disordered. Polar residues predominate over residues 1946-1958 (ATASTISPPSYDS). The span at 1960 to 1984 (TKPDQEKYETDKTEKEDKEKDESRK) shows a compositional bias: basic and acidic residues.

It belongs to the sodium channel (TC 1.A.1.10) family. Nav1.7/SCN9A subfamily. As to quaternary structure, the Nav1.7 voltage-gated sodium channel consists of an ion-conducting alpha subunit SCN9A which is functional on its own regulated by one or more beta-1 (SCN1B), beta-2 (SCN2B), beta-3 (SCN3B) and beta-4 (SCN4B) subunits. SCN1B and SCN3B are non-covalently associated with SCN9A. SCN2B and SCN4B are disulfide-linked to SCN9A. SCN1B regulates channel inactivation. Interacts with NEDD4 and NEDD4L; regulates Nav1.7 activity most probably through ubiquitination and subsequent endocytosis. Interacts with TMEM233; modulates the gating properties of NaV1.7. In terms of processing, ubiquitinated by NEDD4L; which may promote its endocytosis. Post-translationally, phosphorylation at Ser-1488 by PKC in a highly conserved cytoplasmic loop increases peak sodium currents. Expressed strongly in sciatic nerves, with moderate levels in kidney. Not detected in liver, brain and muscle.

It localises to the cell membrane. The protein resides in the cell projection. Its subcellular location is the neuron projection. The protein localises to the axon. It catalyses the reaction Na(+)(in) = Na(+)(out). In terms of biological role, pore-forming subunit of Nav1.7, a voltage-gated sodium (Nav) channel that directly mediates the depolarizing phase of action potentials in excitable membranes. Navs, also called VGSCs (voltage-gated sodium channels) or VDSCs (voltage-dependent sodium channels), operate by switching between closed and open conformations depending on the voltage difference across the membrane. In the open conformation they allow Na(+) ions to selectively pass through the pore, along their electrochemical gradient. The influx of Na(+) ions provokes membrane depolarization, initiating the propagation of electrical signals throughout cells and tissues. Nav1.7 plays a crucial role in controlling the excitability and action potential propagation from nociceptor neurons, thereby contributing to the sensory perception of pain. The chain is Sodium channel protein type 9 subunit alpha from Mus musculus (Mouse).